Here is an 821-residue protein sequence, read N- to C-terminus: Serine/threonine-protein kinase CTR1 (821 aa).

Disordered stretches follow at residues 1–76 and 481–502; these read MEMP…LNNQ and NPGG…PSAN. A compositionally biased stretch (low complexity) spans 14–25; it reads SQFSDDQVSVSV. Polar residues predominate over residues 35 to 49; the sequence is SLSSENRSNHNSGNT. Residues 551–809 enclose the Protein kinase domain; it reads LNIKEKIGAG…TIMDLLRPLI (259 aa). Residues 557 to 565 and Lys-578 each bind ATP; that span reads IGAGSFGTV. Residue Asp-676 is the Proton acceptor of the active site.

The protein belongs to the protein kinase superfamily. TKL Ser/Thr protein kinase family. RAF subfamily. As to quaternary structure, interacts with EIN2 (via C-terminus). As to expression, expressed in both seedlings and adult plants.

It carries out the reaction L-seryl-[protein] + ATP = O-phospho-L-seryl-[protein] + ADP + H(+). The catalysed reaction is L-threonyl-[protein] + ATP = O-phospho-L-threonyl-[protein] + ADP + H(+). Kinase activity is inhibited by C24:1-ceramide during hypoxia (e.g. submergences). In terms of biological role, acts as a negative regulator in the ethylene response pathway. Phosphorylates the cytosolic C-terminal domain of EIN2, preventing the signaling in the absence of ethylene. Interacts with C24:1-ceramide upon hypoxic conditions (e.g. submergences) to in turn regulate EIN2 endoplasmic reticulum (ER)-to-nucleus translocation and EIN3 stabilization. The sequence is that of Serine/threonine-protein kinase CTR1 from Arabidopsis thaliana (Mouse-ear cress).